The primary structure comprises 118 residues: Nucleoid-associated protein TM_0687 (118 aa).

It belongs to the YbaB/EbfC family. As to quaternary structure, homodimer.

It localises to the cytoplasm. It is found in the nucleoid. Its function is as follows. Binds to DNA and alters its conformation. May be involved in regulation of gene expression, nucleoid organization and DNA protection. The protein is Nucleoid-associated protein TM_0687 of Thermotoga maritima (strain ATCC 43589 / DSM 3109 / JCM 10099 / NBRC 100826 / MSB8).